The sequence spans 201 residues: MAEQKNPLTTPSPNADTTIVPAGSPHTHTEQPSGGHGGAFPPFESHTFLSQLIWLALAFGLLYYLMSKVALPRIEAILGNRAGRLSSDLTEAQRMKTEADAAGAAYEKSLREAQAKAQAIAQETRNSLSAEADAKRKTLEAELNQRLAASEATIRTRTTEAMGNVRAIAGETASAIVERLTGQAPDQASLNRALDATPAVH.

Residues 1-17 show a composition bias toward polar residues; sequence MAEQKNPLTTPSPNADT. Residues 1–39 are disordered; that stretch reads MAEQKNPLTTPSPNADTTIVPAGSPHTHTEQPSGGHGGA. A helical membrane pass occupies residues 47 to 66; it reads TFLSQLIWLALAFGLLYYLM.

The protein belongs to the ATPase B chain family. F-type ATPases have 2 components, F(1) - the catalytic core - and F(0) - the membrane proton channel. F(1) has five subunits: alpha(3), beta(3), gamma(1), delta(1), epsilon(1). F(0) has three main subunits: a(1), b(2) and c(10-14). The alpha and beta chains form an alternating ring which encloses part of the gamma chain. F(1) is attached to F(0) by a central stalk formed by the gamma and epsilon chains, while a peripheral stalk is formed by the delta and b chains.

It is found in the cell inner membrane. Its function is as follows. F(1)F(0) ATP synthase produces ATP from ADP in the presence of a proton or sodium gradient. F-type ATPases consist of two structural domains, F(1) containing the extramembraneous catalytic core and F(0) containing the membrane proton channel, linked together by a central stalk and a peripheral stalk. During catalysis, ATP synthesis in the catalytic domain of F(1) is coupled via a rotary mechanism of the central stalk subunits to proton translocation. In terms of biological role, component of the F(0) channel, it forms part of the peripheral stalk, linking F(1) to F(0). The b'-subunit is a diverged and duplicated form of b found in plants and photosynthetic bacteria. The protein is ATP synthase subunit b 2 (atpF2) of Methylorubrum extorquens (strain PA1) (Methylobacterium extorquens).